Reading from the N-terminus, the 100-residue chain is Large ribosomal subunit protein bL21 (100 aa).

The protein belongs to the bacterial ribosomal protein bL21 family. Part of the 50S ribosomal subunit. Contacts protein L20.

This protein binds to 23S rRNA in the presence of protein L20. The protein is Large ribosomal subunit protein bL21 of Ureaplasma urealyticum serovar 10 (strain ATCC 33699 / Western).